We begin with the raw amino-acid sequence, 175 residues long: ATP-dependent protease subunit HslV (175 aa).

Thr-2 is an active-site residue. Residues Gly-158, Cys-161, and Thr-164 each contribute to the Na(+) site.

The protein belongs to the peptidase T1B family. HslV subfamily. As to quaternary structure, a double ring-shaped homohexamer of HslV is capped on each side by a ring-shaped HslU homohexamer. The assembly of the HslU/HslV complex is dependent on binding of ATP.

It is found in the cytoplasm. It carries out the reaction ATP-dependent cleavage of peptide bonds with broad specificity.. With respect to regulation, allosterically activated by HslU binding. Protease subunit of a proteasome-like degradation complex believed to be a general protein degrading machinery. The protein is ATP-dependent protease subunit HslV of Histophilus somni (strain 129Pt) (Haemophilus somnus).